The chain runs to 97 residues: uncharacterized protein (97 aa).

This sequence belongs to the mycobacterial PE family.

In terms of biological role, part of the ESX-1 / type VII specialized secretion system (T7SS), which exports several proteins including EsxA and EsxB. Plays a role in DNA conjugation, in at least a donor strain. This is an uncharacterized protein from Mycolicibacterium smegmatis (strain ATCC 700084 / mc(2)155) (Mycobacterium smegmatis).